A 225-amino-acid polypeptide reads, in one-letter code: Esterase OVCA2 (225 aa).

Catalysis depends on charge relay system residues serine 119, aspartate 177, and histidine 204.

It belongs to the LovG family. In terms of tissue distribution, strongly expressed in kidney and liver. Moderately expressed in brain, skin and testis. Weakly expressed in heart, lung, small intestine, spleen, stomach and thymus.

The catalysed reaction is a carboxylic ester + H2O = an alcohol + a carboxylate + H(+). Exhibits ester hydrolase activity with a strong preference for long-chain alkyl ester substrates and high selectivity against a variety of short, branched, and substituted esters. Is able to hydrolyze ester bonds within a wide range of p-nitrophenyl derivatives (C2-C14) in vitro, with a strong preference toward substrates of &gt;8 carbons. The sequence is that of Esterase OVCA2 (Ovca2) from Mus musculus (Mouse).